A 240-amino-acid chain; its full sequence is Probable transcriptional regulatory protein HPG27_148 (240 aa).

This sequence belongs to the TACO1 family.

It localises to the cytoplasm. The sequence is that of Probable transcriptional regulatory protein HPG27_148 from Helicobacter pylori (strain G27).